The following is a 2715-amino-acid chain: MKMKIQKKEKQLSNLKVLNHSPMSDASVNFDYKSPSPFDCSTDQEEKIEDVASHCLPQKDLYTAEEEAATLFPRKMTSHNGMEDSGGGGTGVKKKRKKKEPGDQEGAAKGSKDREPKPKRKREPKEPKEPRKAKEPKKAKEHKEPKQKDGAKKARKPREASGTKEAKEKRSCTDSAARTKSRKASKEQGPTPVEKKKKGKRKSETTVESLELDQGLTNPSLRSPEESTESTDSQKRRSGRQVKRRKYNEDLDFKVVDDDGETIAVLGAGRTSALSASTLAWQAEEPPEDDANIIEKILASKTVQEVHPGEPPFDLELFYVKYRNFSYLHCKWATMEELEKDPRIAQKIKRFRNKQAQMKHIFTEPDEDLFNPDYVEVDRILEVAHTKDAETGEEVTHYLVKWCSLPYEESTWELEEDVDPAKVKEFESLQVLPEIKHVERPASDSWQKLEKSREYKNSNQLREYQLEGMNWLLFNWYNRKNCILADEMGLGKTIQSITFLSEIFLRGIHGPFLIIAPLSTITNWEREFRTWTEMNAIVYHGSQISRQMIQQYEMVYRDAQGNPLSGVFKFHVVITTFEMILADCPELKKIHWSCVIIDEAHRLKNRNCKLLEGLKLMALEHKVLLTGTPLQNSVEELFSLLNFLEPSQFPSETAFLEEFGDLKTEEQVKKLQSILKPMMLRRLKDDVEKNLAPKQETIIEVELTNIQKKYYRAILEKNFSFLTKGANQHNMPNLINTMMELRKCCNHPYLINGAEEKILEDFRKTHSPDAPDFQLQAMIQAAGKLVLIDKLLPKLIAGGHKVLIFSQMVRCLDILEDYLIQRRYTYERIDGRVRGNLRQAAIDRFCKPDSDRFVFLLCTRAGGLGINLTAADTCIIFDSDWNPQNDLQAQARCHRIGQSKAVKVYRLITRNSYEREMFDKASLKLGLDKAVLQDINRKGGTNGVQQLSKMEVEDLLRKGAYGALMDEEDEGSKFCEEDIDQILQRRTHTITIQSEGKGSTFAKASFVASGNRTDISLDDPNFWQKWAKIAELDTEAKNEKESLVIDRPRVRKQTKHYNSFEEDELMEFSELDSDSDERPTRSRRLNDKARRYLRAECFRVEKNLLIFGWGRWKDILTHGRFKWHLNEKDMEMICRALLVYCVKHYKGDEKIKSFIWELITPTKDGQAQTLQNHSGLSAPVPRGRKGKKTKNQLLIPELKDADWLATCNPEVVLHDDGYKKHLKQHCNKVLLRVRMLYYLKAEILGEAAEKAFEGSPARELDVPLPDIDYMEIPVDWWDAEADKSLLIGVFKHGYERYNAMRADPALCFLEKVGMPDEKSLSAEQGVTDGTSDIPERGNTDKEDNAEDKVDGLQKQTESSSDGGDGVFSEKKDDSRAAQDGSDPDKSPWPVSSALTARLRRLVTVYQRCNRKELCRPEILGPGNQGYWVQEEMFRRTSEMDLINKEAQKRWTRREQADFYRTVSSFGVVYDQEKKTFDWTQFRIISRLDKKSDESLEQYFYSFVAMCRNVCRLPTWKDGGPPDTTIYVEPITEERAARTLYRIELLRKVREQVLKCPQLHERLQLCRPSLYLPVWWECGKHDRDLLIGTAKHGLNRTDCYIMNDPQLSFLDAYRNYAQHKRSGTQAPGNLCCLYQTNSKLYESLTYSQMSRTSESLENEPENLVRVESRDDHLSLPDVTCENFISKVQDVISINHDESLLPESLESMMYGKKVLSQEPSSFQESPSTNTESRKDVITISISKDGNCQSGGPEAEIASGPTFMGSLEAGGVAQANIKNGKHLLMSISKEGELCCSEAGQRPENIGQLEAKCLASPSLNPGNESGFVDMCSLSVCDSKRNLSSDQQLIDLLENKSLESKLILSQNHSDEEEEEEENEEENLAMAVGMGERPEVLHLTEPTTNISREKNQGFQDETKKGSLEVANQTPGLQRAFPAPAACQCHCKHMERWMHGLENDEFEIEKPKAYIPDLFKSKTNTIAMEGEPTAIPSQPFKVKHELLKEPWKESAEGQNVFPTYPLEGSELKSEDMDFENKDDYDRDGNCHSQDYPGKYSEEESKSSTSGITGDIGDELQEARAPTIAQLLQEKTLYSFSEWPKDRVIINRLDNICHVVLKGKWPSSQQYEPSGTLPTPVLTSSAGSRTSLSEPEAAEHSFSNGAALAAQIHKESFLAPVFTKDEQKHRRPYEFEVERDAKARGLEQFSATHGHTPIILNGWHGESAMDLSCSSEGSPGATSPFPVSASTPKIGAISSLQGALGMDLSGILQAGLIHPVTGQIVNGSLRRDDAATRRRRGRRKHVEGGMDLIFLKEQTLQAGILEVHEDPGQATLSTTHPEGPGPATSAPEPATAASSQAEKSIPSKSLLDWLRQQADYSLEVPGFGANFSDKPKQRRPRCKEPGKLDVSSLSGEERVPAIPKEPGLRGFLPENKFNHTLAEPILRDTGPRRRGRRPRSELLKAPSIVADSPSGMGPLFMNGLIAGMDLVGLQNMRNMPGIPLTGLVGFPAGFATMPTGEEVKSTLSMLPMMLPGMAAVPQMFGVGGLLSPPMATTCTSTAPASLSSTTKSGTAVTEKTAEDKPSSHDVKTDTLAEDKPGPGPFSDQSEPAITTSSPVAFNPFLIPGVSPGLIYPSMFLSPGMGMALPAMQQARHSEIVGLESQKRKKKKTKGDNPNSHPEPAPSCEREPSGDENCAEPSAPLPAEREHGAQAGEGALKDSNNDTN.

Residues 1-11 (MKMKIQKKEKQ) are compositionally biased toward basic and acidic residues. 2 disordered regions span residues 1–30 (MKMKIQKKEKQLSNLKVLNHSPMSDASVNF) and 66–244 (EEAA…QVKR). Positions 1-747 (MKMKIQKKEK…MMELRKCCNH (747 aa)) are required for DNA-dependent ATPase activity. Polar residues predominate over residues 12–27 (LSNLKVLNHSPMSDAS). Residues 123 to 172 (EPKEPKEPRKAKEPKKAKEHKEPKQKDGAKKARKPREASGTKEAKEKRSC) are compositionally biased toward basic and acidic residues. Chromo domains lie at 292–343 (NIIE…KDPR) and 375–439 (VEVD…KHVE). Residues 473 to 647 (LFNWYNRKNC…FSLLNFLEPS (175 aa)) enclose the Helicase ATP-binding domain. 486–493 (DEMGLGKT) contacts ATP. The short motif at 598-601 (DEAH) is the DEAH box element. One can recognise a Helicase C-terminal domain in the interval 787-956 (LIDKLLPKLI…LSKMEVEDLL (170 aa)). Positions 1318–1390 (KSLSAEQGVT…SDPDKSPWPV (73 aa)) are disordered. Over residues 1321–1330 (SAEQGVTDGT) the composition is skewed to polar residues. Basic and acidic residues-rich tracts occupy residues 1333 to 1351 (IPERGNTDKEDNAEDKVDG) and 1367 to 1376 (FSEKKDDSRA). Residues 1449 to 1503 (RWTRREQADFYRTVSSFGVVYDQEKKTFDWTQFRIISRLDKKSDESLEQYFYSFV) enclose the Myb-like domain. The segment covering 2027–2038 (FENKDDYDRDGN) has biased composition (basic and acidic residues). 6 disordered regions span residues 2027–2063 (FENKDDYDRDGNCHSQDYPGKYSEEESKSSTSGITGD), 2116–2148 (SQQYEPSGTLPTPVLTSSAGSRTSLSEPEAAEH), 2321–2351 (QATLSTTHPEGPGPATSAPEPATAASSQAEK), 2373–2422 (PGFG…FLPE), 2547–2602 (TSTA…PAIT), and 2648–2715 (VGLE…NDTN). Residues 2116-2141 (SQQYEPSGTLPTPVLTSSAGSRTSLS) are compositionally biased toward polar residues. Low complexity predominate over residues 2329–2346 (PEGPGPATSAPEPATAAS). A compositionally biased stretch (low complexity) spans 2547–2560 (TSTAPASLSSTTKS). 2 stretches are compositionally biased toward basic and acidic residues: residues 2567 to 2588 (KTAEDKPSSHDVKTDTLAEDKP) and 2706 to 2715 (ALKDSNNDTN).

Belongs to the SNF2/RAD54 helicase family. In terms of assembly, interacts with NFE2L2; involved in activation of the transcription. As to quaternary structure, (Microbial infection) Interacts with the influenza A polymerase complex composed fo PB1, PB2 and PA. (Microbial infection) Interacts (via N-terminus) with human papillomavirus protein E8^E2C (via C-terminus); this interaction induces transcriptional repression of the viral genome. In terms of tissue distribution, widely expressed.

It is found in the nucleus. The protein resides in the nucleoplasm. It catalyses the reaction ATP + H2O = ADP + phosphate + H(+). Its function is as follows. ATP-dependent chromatin-remodeling factor. Regulates transcription by disrupting nucleosomes in a largely non-sliding manner which strongly increases the accessibility of chromatin; nucleosome disruption requires ATP. Activates transcription of specific genes in response to oxidative stress through interaction with NFE2L2. In terms of biological role, (Microbial infection) Acts as a transcriptional repressor of different viruses including influenza virus or papillomavirus. During influenza virus infection, the viral polymerase complex localizes CHD6 to inactive chromatin where it gets degraded in a proteasome independent-manner. In Homo sapiens (Human), this protein is Chromodomain-helicase-DNA-binding protein 6 (CHD6).